A 172-amino-acid chain; its full sequence is NADH-ubiquinone oxidoreductase chain 6 (172 aa).

Transmembrane regions (helical) follow at residues 1 to 21, 26 to 48, 52 to 74, 86 to 106, and 147 to 167; these read MTNY…GLAL, IYGG…GFGG, GLMV…TAMA, WFIF…FYLF, and CATW…FIII.

It belongs to the complex I subunit 6 family. In terms of assembly, core subunit of respiratory chain NADH dehydrogenase (Complex I) which is composed of 45 different subunits.

The protein localises to the mitochondrion inner membrane. The catalysed reaction is a ubiquinone + NADH + 5 H(+)(in) = a ubiquinol + NAD(+) + 4 H(+)(out). Functionally, core subunit of the mitochondrial membrane respiratory chain NADH dehydrogenase (Complex I) which catalyzes electron transfer from NADH through the respiratory chain, using ubiquinone as an electron acceptor. Essential for the catalytic activity and assembly of complex I. This chain is NADH-ubiquinone oxidoreductase chain 6, found in Rattus norvegicus (Rat).